Here is a 289-residue protein sequence, read N- to C-terminus: Cell division protein ZipA (289 aa).

Position 1 (M1) is a topological domain, periplasmic. Residues 2–22 (EIGLREWLIVIGIIVIAGILF) form a helical membrane-spanning segment. Over 23-289 (DGWRRMRGSK…ERRALTQRRG (267 aa)) the chain is Cytoplasmic. Residues 48–141 (DEEETTSAEV…KPAQRITEDK (94 aa)) form a disordered region. Basic and acidic residues-rich tracts occupy residues 64 to 77 (LDTHKEPQLDEHDL), 85 to 106 (REGKRSNSDKRGNSDKKRKDEP), and 123 to 141 (GRDDDFPDDKPAQRITEDK).

Belongs to the ZipA family. As to quaternary structure, interacts with FtsZ via their C-terminal domains.

The protein resides in the cell inner membrane. Essential cell division protein that stabilizes the FtsZ protofilaments by cross-linking them and that serves as a cytoplasmic membrane anchor for the Z ring. Also required for the recruitment to the septal ring of downstream cell division proteins. This Pseudomonas savastanoi pv. phaseolicola (strain 1448A / Race 6) (Pseudomonas syringae pv. phaseolicola (strain 1448A / Race 6)) protein is Cell division protein ZipA.